A 526-amino-acid polypeptide reads, in one-letter code: MTQQLNHAKVNQHPGQATLPETAEGQVRTYEVKTYGCQMNVHDSERLSGLLEEAGYVAAPEDATPDLVVFNTCAVRENADMRLYGTLGNLRSVKEKNPGMQIAVGGCLAQKDKDTVVKKAPWVDVVFGTHNIGSLPTLLQRAEHNAQAEVEIVDSLEQFPSVLPAKRESAYAGWVSVSVGCNNTCTFCIVPSLRGKEQDRRPGDILAEVQALVDQGVTEVTLLGQNVNAYGVNFVDPELERDRSAFSKLLRACGEIEGLERVRFTSPHPAEFTSDVIDAMAETPNICPQLHMPLQSGSDKVLKEMRRSYRSKKFLSILDEVRAKIPHASITTDIIVGFPGETEEDFQATLDVVKKARFTSAYTFQYSPRPGTPAAEYENQLPKEVVQERYERLMVVQEQVCEEENQKLIGTTVELLVQAGGGRKNDATKRMSGRARDGRLVHFAPEGDIDGEIRPGDFVTVTVTEAKPFFLIADSGVQTHRRTKAGDNSAVGQVPTTAPIGVGLGLPQIGAPKVAPATESACCSIN.

Residues 1–24 form a disordered region; that stretch reads MTQQLNHAKVNQHPGQATLPETAE. Positions 28–144 constitute an MTTase N-terminal domain; that stretch reads RTYEVKTYGC…LPTLLQRAEH (117 aa). Residues Cys-37, Cys-73, Cys-107, Cys-181, Cys-185, and Cys-188 each contribute to the [4Fe-4S] cluster site. A Radical SAM core domain is found at 167–403; that stretch reads RESAYAGWVS…MVVQEQVCEE (237 aa). The 72-residue stretch at 406-477 folds into the TRAM domain; sequence QKLIGTTVEL…PFFLIADSGV (72 aa).

Belongs to the methylthiotransferase family. MiaB subfamily. In terms of assembly, monomer. It depends on [4Fe-4S] cluster as a cofactor.

Its subcellular location is the cytoplasm. The enzyme catalyses N(6)-dimethylallyladenosine(37) in tRNA + (sulfur carrier)-SH + AH2 + 2 S-adenosyl-L-methionine = 2-methylsulfanyl-N(6)-dimethylallyladenosine(37) in tRNA + (sulfur carrier)-H + 5'-deoxyadenosine + L-methionine + A + S-adenosyl-L-homocysteine + 2 H(+). Functionally, catalyzes the methylthiolation of N6-(dimethylallyl)adenosine (i(6)A), leading to the formation of 2-methylthio-N6-(dimethylallyl)adenosine (ms(2)i(6)A) at position 37 in tRNAs that read codons beginning with uridine. The chain is tRNA-2-methylthio-N(6)-dimethylallyladenosine synthase from Corynebacterium glutamicum (strain R).